The chain runs to 338 residues: Probable family 20 transposase (338 aa).

Belongs to the transposase 20 family.

Functionally, required for the transposition of an insertion element. The sequence is that of Probable family 20 transposase from Pseudomonas aeruginosa (strain ATCC 15692 / DSM 22644 / CIP 104116 / JCM 14847 / LMG 12228 / 1C / PRS 101 / PAO1).